The primary structure comprises 272 residues: 2-dehydro-3-deoxyphosphooctonate aldolase (272 aa).

The protein belongs to the KdsA family.

Its subcellular location is the cytoplasm. The enzyme catalyses D-arabinose 5-phosphate + phosphoenolpyruvate + H2O = 3-deoxy-alpha-D-manno-2-octulosonate-8-phosphate + phosphate. The protein operates within carbohydrate biosynthesis; 3-deoxy-D-manno-octulosonate biosynthesis; 3-deoxy-D-manno-octulosonate from D-ribulose 5-phosphate: step 2/3. Its pathway is bacterial outer membrane biogenesis; lipopolysaccharide biosynthesis. The chain is 2-dehydro-3-deoxyphosphooctonate aldolase from Geobacter sulfurreducens (strain ATCC 51573 / DSM 12127 / PCA).